The chain runs to 114 residues: Probable acid stress chaperone HdeA (114 aa).

Residues 1-26 (MIKALFNKNTALAAVTILALSGGAMA) form the signal peptide. A disulfide bridge links Cys46 with Cys94.

This sequence belongs to the HdeA family.

It localises to the periplasm. Its function is as follows. Required for optimal acid stress protection. Exhibits a chaperone-like activity only at low pH by suppressing non-specifically the aggregation of denaturated periplasmic proteins. In Brucella suis biovar 1 (strain 1330), this protein is Probable acid stress chaperone HdeA.